Consider the following 332-residue polypeptide: L-lactate dehydrogenase A chain (332 aa).

Position 2 is an N-acetylalanine (alanine 2). Lysine 5 is subject to N6-acetyllysine; alternate. Position 5 is an N6-succinyllysine; alternate (lysine 5). Lysine 14 carries the N6-acetyllysine modification. Glycine 29–lysine 57 provides a ligand contact to NAD(+). Lysine 57 bears the N6-acetyllysine; alternate mark. A Glycyl lysine isopeptide (Lys-Gly) (interchain with G-Cter in SUMO2); alternate cross-link involves residue lysine 57. Position 81 is an N6-acetyllysine (lysine 81). A substrate-binding site is contributed by arginine 106. Lysine 118 carries the N6-acetyllysine; alternate modification. Lysine 118 is subject to N6-succinyllysine; alternate. Lysine 126 bears the N6-acetyllysine mark. Asparagine 138 is an NAD(+) binding site. Residues asparagine 138 and arginine 169 each contribute to the substrate site. The active-site Proton acceptor is the histidine 193. N6-acetyllysine is present on residues lysine 224 and lysine 232. Tyrosine 239 carries the post-translational modification Phosphotyrosine. Lysine 243 bears the N6-acetyllysine mark. Threonine 248 lines the substrate pocket. At threonine 309 the chain carries Phosphothreonine. An N6-acetyllysine; alternate modification is found at lysine 318. Lysine 318 is subject to N6-succinyllysine; alternate. Residue threonine 322 is modified to Phosphothreonine.

This sequence belongs to the LDH/MDH superfamily. LDH family. Homotetramer. Interacts with PTEN upstream reading frame protein MP31. In terms of processing, ISGylated.

It is found in the cytoplasm. It catalyses the reaction (S)-lactate + NAD(+) = pyruvate + NADH + H(+). Its pathway is fermentation; pyruvate fermentation to lactate; (S)-lactate from pyruvate: step 1/1. In terms of biological role, interconverts simultaneously and stereospecifically pyruvate and lactate with concomitant interconversion of NADH and NAD(+). This Bos mutus grunniens (Wild yak) protein is L-lactate dehydrogenase A chain (LDHA).